The following is a 291-amino-acid chain: Acetyl-coenzyme A carboxylase carboxyl transferase subunit beta (291 aa).

In terms of domain architecture, CoA carboxyltransferase N-terminal spans 23 to 291 (VWHKCPSCTA…PPDLPVEESV (269 aa)). Zn(2+)-binding residues include C27, C30, C46, and C49. The C4-type zinc-finger motif lies at 27–49 (CPSCTAVLYRVELERNLEVCPKC).

This sequence belongs to the AccD/PCCB family. As to quaternary structure, acetyl-CoA carboxylase is a heterohexamer composed of biotin carboxyl carrier protein (AccB), biotin carboxylase (AccC) and two subunits each of ACCase subunit alpha (AccA) and ACCase subunit beta (AccD). Requires Zn(2+) as cofactor.

The protein localises to the cytoplasm. The catalysed reaction is N(6)-carboxybiotinyl-L-lysyl-[protein] + acetyl-CoA = N(6)-biotinyl-L-lysyl-[protein] + malonyl-CoA. The protein operates within lipid metabolism; malonyl-CoA biosynthesis; malonyl-CoA from acetyl-CoA: step 1/1. Its function is as follows. Component of the acetyl coenzyme A carboxylase (ACC) complex. Biotin carboxylase (BC) catalyzes the carboxylation of biotin on its carrier protein (BCCP) and then the CO(2) group is transferred by the transcarboxylase to acetyl-CoA to form malonyl-CoA. The polypeptide is Acetyl-coenzyme A carboxylase carboxyl transferase subunit beta (Coxiella burnetii (strain Dugway 5J108-111)).